The sequence spans 416 residues: 3-isopropylmalate dehydratase large subunit 2 (416 aa).

Positions 296, 356, and 359 each coordinate [4Fe-4S] cluster.

This sequence belongs to the aconitase/IPM isomerase family. LeuC type 2 subfamily. In terms of assembly, heterodimer of LeuC and LeuD. Requires [4Fe-4S] cluster as cofactor.

It catalyses the reaction (2R,3S)-3-isopropylmalate = (2S)-2-isopropylmalate. Its pathway is amino-acid biosynthesis; L-leucine biosynthesis; L-leucine from 3-methyl-2-oxobutanoate: step 2/4. Catalyzes the isomerization between 2-isopropylmalate and 3-isopropylmalate, via the formation of 2-isopropylmaleate. The protein is 3-isopropylmalate dehydratase large subunit 2 of Archaeoglobus fulgidus (strain ATCC 49558 / DSM 4304 / JCM 9628 / NBRC 100126 / VC-16).